The primary structure comprises 514 residues: Glutathione-binding protein GsiB (514 aa).

Residues 1-26 (MARAVHRSGLVALGIATALMASCAFA) form the signal peptide.

Belongs to the bacterial solute-binding protein 5 family. As to quaternary structure, the complex is composed of two ATP-binding proteins (GsiA), two transmembrane proteins (GsiC and GsiD) and a solute-binding protein (GsiB).

It localises to the periplasm. Its function is as follows. Part of the ABC transporter complex GsiABCD involved in glutathione import. Binds glutathione. The chain is Glutathione-binding protein GsiB from Shigella flexneri serotype 5b (strain 8401).